We begin with the raw amino-acid sequence, 372 residues long: L-selectin (372 aa).

Positions 1–28 (MVFPWRCQSAQRGSWSFLKLWIRTLLCC) are cleaved as a signal peptide. Residues 29–38 (DLLPHHGTHC) constitute a propeptide that is removed on maturation. At 39-332 (WTYHYSERSM…FSKIKEGDYN (294 aa)) the chain is on the extracellular side. The C-type lectin domain occupies 55-155 (KFCKHNYTDL…ACHKRKAALC (101 aa)). 10 cysteine pairs are disulfide-bonded: Cys57–Cys155, Cys128–Cys147, Cys128–Cys160, Cys160–Cys171, Cys165–Cys180, Cys182–Cys191, Cys197–Cys241, Cys227–Cys254, Cys259–Cys303, and Cys289–Cys316. Residues Asn60 and Asn104 are each glycosylated (N-linked (GlcNAc...) asparagine). Glu118, Asn120, Glu126, Asn143, and Asp144 together coordinate Ca(2+). The 37-residue stretch at 156 to 192 (YTASCQPESCNRHGECVETINNNTCICDPGYYGPQCQ) folds into the EGF-like domain. Asn177 is a glycosylation site (N-linked (GlcNAc...) asparagine). Sushi domains follow at residues 195 to 256 (IQCE…ICQV) and 257 to 318 (IQCM…ICQK). N-linked (GlcNAc...) asparagine glycosylation is found at Asn226, Asn246, and Asn278. A helical membrane pass occupies residues 333–355 (PLFIPVAVMVTAFSGLAFIIWLA). At 356–372 (RRLKKGKKSQERMDDPY) the chain is on the cytoplasmic side.

The protein belongs to the selectin/LECAM family. In terms of assembly, interaction with SELPLG/PSGL1 and PODXL2 is required for promoting recruitment and rolling of leukocytes. This interaction is dependent on the sialyl Lewis X glycan modification of SELPLG and PODXL2, and tyrosine sulfation modifications of SELPLG. Sulfation on 'Tyr-51' of SELPLG is important for L-selectin binding. In terms of processing, N-glycosylated. Expressed in peripheral blood mononuclear cells (PBMC), spleen and thymus.

The protein resides in the cell membrane. In terms of biological role, calcium-dependent lectin that mediates cell adhesion by binding to glycoproteins on neighboring cells. Mediates the adherence of lymphocytes to endothelial cells of high endothelial venules in peripheral lymph nodes. Promotes initial tethering and rolling of leukocytes in endothelia. This is L-selectin (Sell) from Rattus norvegicus (Rat).